The chain runs to 353 residues: MNGDQKLDAYAQERQDFIQHFSQIVKVLTEEDIGHPEIGDAITRLKEVLEYNAIGGKYNRGLTVVITFRELVEPGKQDPDSLQRALTVGWCVELLQAFFLVSDDIMDSSLTRRGQTCWYQKPGIGLDAINDAFLLESSIYRLLKLYCREQPYYLDLIELFLQSSYQTEIGQTLDLITAPQGNVDLGRFTEKRYKSIVKYKTAFYSFYLPVAAAMYMAGIDGEKEHAHAKKILLEMGEFFQIQDDYLDLFGDPSMTGKIGTDIQDNKCSWLVVQCLQRASPEQRQILQENYGQKEAEKVARVKALYEEMNLSAVYMQYEEDSYNHIMGLIEQYAAPLPPAIFLGLAQKIYKRKK.

Isopentenyl diphosphate is bound by residues Lys57, Arg60, and Gln96. The residue at position 57 (Lys57) is an N6-(2-hydroxyisobutyryl)lysine; alternate. Lys57 is subject to N6-acetyllysine; alternate. Asp103 and Asp107 together coordinate Mg(2+). Arg112 lines the dimethylallyl diphosphate pocket. Residue Arg113 coordinates isopentenyl diphosphate. Residues Lys200, Thr201, Gln240, Lys257, and Lys266 each coordinate dimethylallyl diphosphate.

Belongs to the FPP/GGPP synthase family. As to quaternary structure, homodimer. Interacts with RSAD2. Interacts with bovine leukemia virus (BLV) protein G4. Requires Mg(2+) as cofactor.

The protein localises to the cytoplasm. It catalyses the reaction isopentenyl diphosphate + dimethylallyl diphosphate = (2E)-geranyl diphosphate + diphosphate. The enzyme catalyses isopentenyl diphosphate + (2E)-geranyl diphosphate = (2E,6E)-farnesyl diphosphate + diphosphate. The protein operates within isoprenoid biosynthesis; farnesyl diphosphate biosynthesis; farnesyl diphosphate from geranyl diphosphate and isopentenyl diphosphate: step 1/1. It functions in the pathway isoprenoid biosynthesis; geranyl diphosphate biosynthesis; geranyl diphosphate from dimethylallyl diphosphate and isopentenyl diphosphate: step 1/1. Its activity is regulated as follows. Inactivated by interferon-induced RSAD2. This inactivation may result of disruption of lipid rafts at the plasma membrane, and thus have an antiviral effect since many enveloped viruses need lipid rafts to bud efficiently out of the cell. In terms of biological role, key enzyme in isoprenoid biosynthesis which catalyzes the formation of farnesyl diphosphate (FPP), a precursor for several classes of essential metabolites including sterols, dolichols, carotenoids, and ubiquinones. FPP also serves as substrate for protein farnesylation and geranylgeranylation. Catalyzes the sequential condensation of isopentenyl pyrophosphate with the allylic pyrophosphates, dimethylallyl pyrophosphate, and then with the resultant geranylpyrophosphate to the ultimate product farnesyl pyrophosphate. This chain is Farnesyl pyrophosphate synthase (FDPS), found in Bos taurus (Bovine).